Reading from the N-terminus, the 503-residue chain is Glutamate/gamma-aminobutyrate antiporter (503 aa).

33 to 43 (LHLVFFLLLGG) contributes to the L-glutamate binding site. Transmembrane regions (helical) follow at residues 35-55 (LVFF…LCAA), 153-173 (FVVG…AYFI), 194-214 (VSTL…EASA), 232-252 (ILLV…VAAV), 366-386 (LTVV…FVLI), 407-427 (IIAG…FVPP), and 440-460 (MILL…YELH).

The protein belongs to the amino acid-polyamine-organocation (APC) superfamily. Glutamate:GABA antiporter (GGA) (TC 2.A.3.7) family.

The protein resides in the cell membrane. It carries out the reaction 4-aminobutanoate(in) + L-glutamate(out) = 4-aminobutanoate(out) + L-glutamate(in). Functionally, involved in glutaminase-dependent acid resistance. Exchanges extracellular glutamate (Glu) for intracellular gamma-aminobutyric acid (GABA) under acidic conditions. The chain is Glutamate/gamma-aminobutyrate antiporter from Lactococcus lactis subsp. cremoris (strain MG1363).